We begin with the raw amino-acid sequence, 331 residues long: MVQGSVNLNTERGKEWLQDYVDNWVNFYQKQTDEGKVASYIPRLEHADPNALGISIIGKNGTVIRSGDTDLEFSIQSISKVLSFIVACMERGLSYVLQRVDVEPTGESFNSIMHLEINQPKKPFNPLVNSGAITVSSLLNGRTSDQKLEPLYQLLEKILGHRPEIDVEVYVSERDTSMRNRAIGYYLLEEGYLESDLSITLETYFKHCSLNVTVDDLAMIGLVLSNDGVHPNTDEPLIPKQIARVAKSLMLTCGMYDASGKFASYVGIPAKSGVSGGILAVVPPRVRDQNLPFLEGCGIGVFGPALDKQGNSIAGIKLLRHIANQWDLSLF.

Substrate is bound by residues S77, N129, E173, N180, Y204, Y256, and V274.

It belongs to the glutaminase family. Homotetramer.

It carries out the reaction L-glutamine + H2O = L-glutamate + NH4(+). This chain is Glutaminase, found in Oceanobacillus iheyensis (strain DSM 14371 / CIP 107618 / JCM 11309 / KCTC 3954 / HTE831).